The chain runs to 87 residues: Putative sodium channel toxin Ts38 (87 aa).

Residues 1–22 (MKHLKFYSILFLFSIFVYKVNA) form the signal peptide. Cystine bridges form between cysteine 42–cysteine 65, cysteine 51–cysteine 72, and cysteine 55–cysteine 74.

The protein belongs to the long (3 C-C) scorpion toxin superfamily. Sodium channel inhibitor family. In terms of tissue distribution, expressed by the venom gland.

Its subcellular location is the secreted. Functionally, putative sodium channel toxin. The polypeptide is Putative sodium channel toxin Ts38 (Tityus serrulatus (Brazilian scorpion)).